The chain runs to 500 residues: NAD(P)H-quinone oxidoreductase chain 4, chloroplastic (500 aa).

The next 14 membrane-spanning stretches (helical) occupy residues 3–23, 37–57, 87–107, 113–130, 134–154, 167–187, 208–228, 242–262, 272–292, 305–325, 330–350, 386–406, 416–436, and 462–482; these read FFPW…LIFF, ICIC…HFQL, IGPI…AWPI, LFHF…GSFS, LLLF…LLSM, FILY…GMGL, ALEI…SPII, HYST…YGLV, AHSI…IYAA, IAYS…SITD, GAVL…FLAG, LALP…GIIT, ILIT…SLSM, and LFVS…PDFV.

Belongs to the complex I subunit 4 family.

The protein resides in the plastid. It is found in the chloroplast thylakoid membrane. It catalyses the reaction a plastoquinone + NADH + (n+1) H(+)(in) = a plastoquinol + NAD(+) + n H(+)(out). The catalysed reaction is a plastoquinone + NADPH + (n+1) H(+)(in) = a plastoquinol + NADP(+) + n H(+)(out). The chain is NAD(P)H-quinone oxidoreductase chain 4, chloroplastic from Platanus occidentalis (Sycamore).